The primary structure comprises 417 residues: Mitochondrial tRNA-specific 2-thiouridylase 1 (417 aa).

Residues Ala-32–Ser-39 and Met-58 each bind ATP. The interval Asn-122–Asp-124 is interaction with target base in tRNA. The active-site Nucleophile is the Cys-127. Cysteines 127 and 229 form a disulfide. An ATP-binding site is contributed by Gly-154. Residues Lys-179–Gln-181 form an interaction with tRNA region. Cys-229 functions as the Cysteine persulfide intermediate in the catalytic mechanism. Residues Arg-354 to Ser-355 are interaction with tRNA.

Belongs to the MnmA/TRMU family.

The protein localises to the mitochondrion. The catalysed reaction is 5-taurinomethyluridine(34) in tRNA + S-sulfanyl-L-cysteinyl-[protein] + AH2 + ATP = 5-taurinomethyl-2-thiouridine(34) in tRNA + L-cysteinyl-[protein] + A + AMP + diphosphate + H(+). In terms of biological role, catalyzes the 2-thiolation of uridine at the wobble position (U34) of mitochondrial tRNA(Lys), tRNA(Glu) and tRNA(Gln). Required for the formation of 5-taurinomethyl-2-thiouridine (tm5s2U) of mitochondrial tRNA(Lys), tRNA(Glu), and tRNA(Gln) at the wobble position. ATP is required to activate the C2 atom of the wobble base. The polypeptide is Mitochondrial tRNA-specific 2-thiouridylase 1 (SLM3) (Saccharomyces cerevisiae (strain ATCC 204508 / S288c) (Baker's yeast)).